The chain runs to 452 residues: tRNA modification GTPase MnmE (452 aa).

Residues R21, E78, and K118 each contribute to the (6S)-5-formyl-5,6,7,8-tetrahydrofolate site. The TrmE-type G domain maps to 214 to 375 (GMKVVIAGRP…LREHLKQSMG (162 aa)). N224 contributes to the K(+) binding site. GTP contacts are provided by residues 224–229 (NAGKSS), 243–249 (TDIAGTT), and 268–271 (DTAG). S228 provides a ligand contact to Mg(2+). Residues T243, I245, and T248 each contribute to the K(+) site. Residue T249 participates in Mg(2+) binding. K452 provides a ligand contact to (6S)-5-formyl-5,6,7,8-tetrahydrofolate.

It belongs to the TRAFAC class TrmE-Era-EngA-EngB-Septin-like GTPase superfamily. TrmE GTPase family. In terms of assembly, homodimer. Heterotetramer of two MnmE and two MnmG subunits. Requires K(+) as cofactor.

The protein localises to the cytoplasm. In terms of biological role, exhibits a very high intrinsic GTPase hydrolysis rate. Involved in the addition of a carboxymethylaminomethyl (cmnm) group at the wobble position (U34) of certain tRNAs, forming tRNA-cmnm(5)s(2)U34. In Actinobacillus succinogenes (strain ATCC 55618 / DSM 22257 / CCUG 43843 / 130Z), this protein is tRNA modification GTPase MnmE.